The chain runs to 393 residues: Formate-dependent phosphoribosylglycinamide formyltransferase (393 aa).

N(1)-(5-phospho-beta-D-ribosyl)glycinamide contacts are provided by residues 22–23 and Glu82; that span reads EL. Residues Arg114, Lys155, 160–165, 195–198, and Glu203 contribute to the ATP site; these read SSGKGQ and EGFI. The region spanning 119–308 is the ATP-grasp domain; sequence RLAAEELDLP…QFALHARAIL (190 aa). Residues Glu267 and Glu279 each contribute to the Mg(2+) site. N(1)-(5-phospho-beta-D-ribosyl)glycinamide is bound by residues Asp286, Lys356, and 363-364; that span reads RR.

It belongs to the PurK/PurT family. Homodimer.

The enzyme catalyses N(1)-(5-phospho-beta-D-ribosyl)glycinamide + formate + ATP = N(2)-formyl-N(1)-(5-phospho-beta-D-ribosyl)glycinamide + ADP + phosphate + H(+). Its pathway is purine metabolism; IMP biosynthesis via de novo pathway; N(2)-formyl-N(1)-(5-phospho-D-ribosyl)glycinamide from N(1)-(5-phospho-D-ribosyl)glycinamide (formate route): step 1/1. In terms of biological role, involved in the de novo purine biosynthesis. Catalyzes the transfer of formate to 5-phospho-ribosyl-glycinamide (GAR), producing 5-phospho-ribosyl-N-formylglycinamide (FGAR). Formate is provided by PurU via hydrolysis of 10-formyl-tetrahydrofolate. The sequence is that of Formate-dependent phosphoribosylglycinamide formyltransferase from Pseudomonas putida (strain GB-1).